A 218-amino-acid chain; its full sequence is Synaptonemal complex central element protein 2 (218 aa).

Over residues 1–32 (MERQGVDVPHVKCKDQEPQPLGESKEHPRWEE) the composition is skewed to basic and acidic residues. A disordered region spans residues 1-42 (MERQGVDVPHVKCKDQEPQPLGESKEHPRWEENCEEEAGGGP). Positions 61–87 (SSLDSSIDILQKRAQELIENINKSRQK) form a coiled coil. The disordered stretch occupies residues 171–218 (RWGPDHSRGKSPPRPGNSQPPDVFVSSVAETTSQATASEVQTNRDGEC). A compositionally biased stretch (polar residues) spans 198–211 (VAETTSQATASEVQ).

It belongs to the SYCE family. In terms of assembly, homodimer. Found in a complex with SYCP1 and SYCE1. Interacts with SYCP1, SYCE1 and SYCE3. Interacts with TEX12.

It localises to the nucleus. Its subcellular location is the chromosome. Major component of the transverse central element of synaptonemal complexes (SCS), formed between homologous chromosomes during meiotic prophase. Requires SYCP1 in order to be incorporated into the central element. May have a role in the synaptonemal complex assembly, stabilization and recombination. This Homo sapiens (Human) protein is Synaptonemal complex central element protein 2 (SYCE2).